Reading from the N-terminus, the 344-residue chain is Photosystem II protein D1 (344 aa).

Threonine 2 is modified (N-acetylthreonine). The residue at position 2 (threonine 2) is a Phosphothreonine. 3 consecutive transmembrane segments (helical) span residues 29–46 (YIGWFGVLMFPLLLTATS), 118–133 (HFLLGVACYMGREWEL), and 142–156 (WIAVAYSAPVAAATA). Histidine 118 serves as a coordination point for chlorophyll a. Tyrosine 126 contributes to the pheophytin a binding site. Aspartate 170 and glutamate 189 together coordinate [CaMn4O5] cluster. The chain crosses the membrane as a helical span at residues 197–218 (FHMLGVAGVFGGSLFSAMHGSL). Residue histidine 198 participates in chlorophyll a binding. A quinone-binding positions include histidine 215 and 264-265 (SF). A Fe cation-binding site is contributed by histidine 215. Histidine 272 provides a ligand contact to Fe cation. A helical transmembrane segment spans residues 274–288 (FLAAWPVVCIWFTAL). [CaMn4O5] cluster is bound by residues histidine 332, glutamate 333, aspartate 342, and alanine 344.

Belongs to the reaction center PufL/M/PsbA/D family. PSII is composed of 1 copy each of membrane proteins PsbA, PsbB, PsbC, PsbD, PsbE, PsbF, PsbH, PsbI, PsbJ, PsbK, PsbL, PsbM, PsbT, PsbX, PsbY, PsbZ, Psb30/Ycf12, at least 3 peripheral proteins of the oxygen-evolving complex and a large number of cofactors. It forms dimeric complexes. It depends on The D1/D2 heterodimer binds P680, chlorophylls that are the primary electron donor of PSII, and subsequent electron acceptors. It shares a non-heme iron and each subunit binds pheophytin, quinone, additional chlorophylls, carotenoids and lipids. D1 provides most of the ligands for the Mn4-Ca-O5 cluster of the oxygen-evolving complex (OEC). There is also a Cl(-1) ion associated with D1 and D2, which is required for oxygen evolution. The PSII complex binds additional chlorophylls, carotenoids and specific lipids. as a cofactor. Post-translationally, tyr-161 forms a radical intermediate that is referred to as redox-active TyrZ, YZ or Y-Z.

It localises to the plastid. The protein localises to the chloroplast thylakoid membrane. It catalyses the reaction 2 a plastoquinone + 4 hnu + 2 H2O = 2 a plastoquinol + O2. In terms of biological role, photosystem II (PSII) is a light-driven water:plastoquinone oxidoreductase that uses light energy to abstract electrons from H(2)O, generating O(2) and a proton gradient subsequently used for ATP formation. It consists of a core antenna complex that captures photons, and an electron transfer chain that converts photonic excitation into a charge separation. The D1/D2 (PsbA/PsbD) reaction center heterodimer binds P680, the primary electron donor of PSII as well as several subsequent electron acceptors. The protein is Photosystem II protein D1 of Staurastrum punctulatum (Green alga).